A 777-amino-acid chain; its full sequence is Endonuclease MutS2 (777 aa).

Gly328–Thr335 is an ATP binding site. The Smr domain occupies Leu702–Lys777.

It belongs to the DNA mismatch repair MutS family. MutS2 subfamily. In terms of assembly, homodimer. Binds to stalled ribosomes, contacting rRNA.

In terms of biological role, endonuclease that is involved in the suppression of homologous recombination and thus may have a key role in the control of bacterial genetic diversity. Functionally, acts as a ribosome collision sensor, splitting the ribosome into its 2 subunits. Detects stalled/collided 70S ribosomes which it binds and splits by an ATP-hydrolysis driven conformational change. Acts upstream of the ribosome quality control system (RQC), a ribosome-associated complex that mediates the extraction of incompletely synthesized nascent chains from stalled ribosomes and their subsequent degradation. Probably generates substrates for RQC. The chain is Endonuclease MutS2 from Streptococcus gordonii (strain Challis / ATCC 35105 / BCRC 15272 / CH1 / DL1 / V288).